Here is a 645-residue protein sequence, read N- to C-terminus: Sodium-dependent phosphate transporter 2 (645 aa).

At 1–5 (MAMDE) the chain is on the extracellular side. Residues 6–26 (YLWMVILGFIIAFILAFSVGA) form a helical membrane-spanning segment. Residues 27-46 (NDVANSFGTAVGSGVVTLRQ) are Cytoplasmic-facing. The chain crosses the membrane as a helical span at residues 47 to 67 (ACILASIFETTGSVLLGAKVG). Residues 68-86 (ETIRKGIIDVNLYNNTVET) are Extracellular-facing. N-linked (GlcNAc...) asparagine glycosylation occurs at N81. Residues 87–107 (LMAGEVSAMVGSAVWQLIASF) form a helical membrane-spanning segment. Residues 108–109 (LR) are Cytoplasmic-facing. A helical membrane pass occupies residues 110–130 (FPISGTHCIVGATIGFSLVAI). The Extracellular portion of the chain corresponds to 131-142 (GTQGVQWMELVK). Residues 143–163 (IVASWFISPLLSGFMSGVLFV) form a helical membrane-spanning segment. The Cytoplasmic portion of the chain corresponds to 164 to 190 (LIRMFILKKEDPVPNGLRALPVFYAAT). Residues 191-211 (IAINVFSIMYTGAPVMGLVLP) form a helical membrane-spanning segment. Residues 212 to 213 (MW) are Extracellular-facing. A helical transmembrane segment spans residues 214-234 (AIALISFGVALLFALFVWLFV). The Cytoplasmic segment spans residues 235 to 475 (CPWMRRKITG…EEKEEKDSPE (241 aa)). Phosphoserine is present on residues S253, S256, S259, S268, S316, and S379. The disordered stretch occupies residues 275–320 (PGAKAHDDSTVPLTGSAADPSGTSESMSGGHHPRAPYGRALSMTHG). The interval 448–471 (RLAPPLAEPEPPRDDPADEEKEEK) is disordered. Residues 476-496 (VHLLFHFLQVLTACFGSFAHG) form a helical membrane-spanning segment. Residues 497–523 (GNDVSNAIGPLVALWLIYEQGAVLQEA) lie on the Extracellular side of the membrane. The chain crosses the membrane as a helical span at residues 524–544 (ATPVWLLFYGGVGICTGLWVW). The Cytoplasmic segment spans residues 545-564 (GRRVIQTMGKDLTPITPSSG). The chain crosses the membrane as a helical span at residues 565 to 579 (FTIELASAFTVVIAS). Residues 580 to 586 (NIGLPVS) lie on the Extracellular side of the membrane. The chain crosses the membrane as a helical span at residues 587 to 602 (TTHCKVGSVVAVGWIR). Topologically, residues 603 to 614 (SRKAVDWRLFRN) are cytoplasmic. The chain crosses the membrane as a helical span at residues 615 to 635 (IFVAWFVTVPVAGLFSAAIMA). Topologically, residues 636–645 (LLIHGILPFV) are extracellular.

Belongs to the inorganic phosphate transporter (PiT) (TC 2.A.20) family. In terms of assembly, homodimer.

It is found in the cell membrane. The protein resides in the apical cell membrane. It catalyses the reaction 2 Na(+)(out) + phosphate(out) = 2 Na(+)(in) + phosphate(in). Sodium-phosphate symporter which preferentially transports the monovalent form of phosphate with a stoichiometry of two sodium ions per phosphate ion. Plays a critical role in the determination of bone quality and strength by providing phosphate for bone mineralization. Required to maintain normal cerebrospinal fluid phosphate levels. Mediates phosphate-induced calcification of vascular smooth muscle cells (VCMCs) and can functionally compensate for loss of SLC20A1 in VCMCs. The protein is Sodium-dependent phosphate transporter 2 (SLC20A2) of Bos taurus (Bovine).